The following is a 160-amino-acid chain: MNIIGIDPSLNSTGWAILSVNDNNYNEIRLVNNGSILTSNKKTIGERLNKIYSELLNILNSYKVDTASMEEIFINKNPKSSTLLCYARGILLLTLDVACIPLFEYSANRVKKSITGNGHAKKEQVCFMIENILNIKCYGTYDISDAIAVAICHIYSIKAF.

Residues Asp-7, Glu-70, and Asp-142 contribute to the active site. Residues Asp-7, Glu-70, and Asp-142 each coordinate Mg(2+).

Belongs to the RuvC family. Homodimer which binds Holliday junction (HJ) DNA. The HJ becomes 2-fold symmetrical on binding to RuvC with unstacked arms; it has a different conformation from HJ DNA in complex with RuvA. In the full resolvosome a probable DNA-RuvA(4)-RuvB(12)-RuvC(2) complex forms which resolves the HJ. Mg(2+) serves as cofactor.

It localises to the cytoplasm. The catalysed reaction is Endonucleolytic cleavage at a junction such as a reciprocal single-stranded crossover between two homologous DNA duplexes (Holliday junction).. Functionally, the RuvA-RuvB-RuvC complex processes Holliday junction (HJ) DNA during genetic recombination and DNA repair. Endonuclease that resolves HJ intermediates. Cleaves cruciform DNA by making single-stranded nicks across the HJ at symmetrical positions within the homologous arms, yielding a 5'-phosphate and a 3'-hydroxyl group; requires a central core of homology in the junction. The consensus cleavage sequence is 5'-(A/T)TT(C/G)-3'. Cleavage occurs on the 3'-side of the TT dinucleotide at the point of strand exchange. HJ branch migration catalyzed by RuvA-RuvB allows RuvC to scan DNA until it finds its consensus sequence, where it cleaves and resolves the cruciform DNA. The polypeptide is Crossover junction endodeoxyribonuclease RuvC (Ehrlichia ruminantium (strain Gardel)).